An 84-amino-acid polypeptide reads, in one-letter code: U8-theraphotoxin-Hhn1d (84 aa).

An N-terminal signal peptide occupies residues 1 to 21; that stretch reads MKVVLIVCLVWVMAMMELVSC. 5 disulfide bridges follow: cysteine 23-cysteine 35, cysteine 29-cysteine 44, cysteine 34-cysteine 67, cysteine 54-cysteine 75, and cysteine 69-cysteine 81.

Belongs to the AVIT (prokineticin) family. As to expression, expressed by the venom gland.

It localises to the secreted. This chain is U8-theraphotoxin-Hhn1d, found in Cyriopagopus hainanus (Chinese bird spider).